Here is a 376-residue protein sequence, read N- to C-terminus: Polar flagellin A (376 aa).

Coiled-coil stretches lie at residues 103–128 (SNSKAERVAIQEEVTALNDELNRIAE) and 310–338 (FQNRFNHAISNLDNINENVNASNSRIKDT).

It belongs to the bacterial flagellin family. As to quaternary structure, heteromer of multiple flagellin subunits including FlaA, FlaB/D, FlaC, FlaE and FlaF.

The protein resides in the secreted. It is found in the bacterial flagellum. Functionally, flagellin is the subunit protein which polymerizes to form the filaments of bacterial flagella. FlaA is not essential for polar flagellar synthesis and swimming motility. Homomer of FlaA is able to form a functional filament. The protein is Polar flagellin A (flaA) of Vibrio parahaemolyticus serotype O3:K6 (strain RIMD 2210633).